The following is a 58-amino-acid chain: Large ribosomal subunit protein bL32 (58 aa).

It belongs to the bacterial ribosomal protein bL32 family.

This is Large ribosomal subunit protein bL32 from Prochlorococcus marinus (strain MIT 9515).